A 158-amino-acid polypeptide reads, in one-letter code: NAD(P)H-quinone oxidoreductase subunit J, chloroplastic (158 aa).

It belongs to the complex I 30 kDa subunit family. As to quaternary structure, NDH is composed of at least 16 different subunits, 5 of which are encoded in the nucleus.

It localises to the plastid. Its subcellular location is the chloroplast thylakoid membrane. It carries out the reaction a plastoquinone + NADH + (n+1) H(+)(in) = a plastoquinol + NAD(+) + n H(+)(out). It catalyses the reaction a plastoquinone + NADPH + (n+1) H(+)(in) = a plastoquinol + NADP(+) + n H(+)(out). Its function is as follows. NDH shuttles electrons from NAD(P)H:plastoquinone, via FMN and iron-sulfur (Fe-S) centers, to quinones in the photosynthetic chain and possibly in a chloroplast respiratory chain. The immediate electron acceptor for the enzyme in this species is believed to be plastoquinone. Couples the redox reaction to proton translocation, and thus conserves the redox energy in a proton gradient. The protein is NAD(P)H-quinone oxidoreductase subunit J, chloroplastic of Buxus microphylla (Littleleaf boxwood).